The following is a 135-amino-acid chain: Small ribosomal subunit protein uS12 (135 aa).

A disordered region spans residues 1-29 (MPTINQLVRKGREKVEKKSKAPALQGNPQ). The residue at position 89 (Asp89) is a 3-methylthioaspartic acid. The disordered stretch occupies residues 106 to 135 (GVKDRKQSRSKYGAKRPKPGQAAATTGKKK). The segment covering 113 to 123 (SRSKYGAKRPK) has biased composition (basic residues).

Belongs to the universal ribosomal protein uS12 family. As to quaternary structure, part of the 30S ribosomal subunit. Contacts proteins S8 and S17. May interact with IF1 in the 30S initiation complex.

In terms of biological role, with S4 and S5 plays an important role in translational accuracy. Interacts with and stabilizes bases of the 16S rRNA that are involved in tRNA selection in the A site and with the mRNA backbone. Located at the interface of the 30S and 50S subunits, it traverses the body of the 30S subunit contacting proteins on the other side and probably holding the rRNA structure together. The combined cluster of proteins S8, S12 and S17 appears to hold together the shoulder and platform of the 30S subunit. This chain is Small ribosomal subunit protein uS12, found in Sulfurihydrogenibium sp. (strain YO3AOP1).